A 415-amino-acid polypeptide reads, in one-letter code: Citrate (Re)-synthase (415 aa).

The Pyruvate carboxyltransferase domain occupies 4–275 (IFIIDVTNRD…GHEVDLSKAW (272 aa)).

It belongs to the alpha-IPM synthase/homocitrate synthase family. Mn(2+) is required as a cofactor.

The enzyme catalyses oxaloacetate + acetyl-CoA + H2O = citrate + CoA + H(+). Its activity is regulated as follows. Inhibited by citrate and under aerobic conditions. Functionally, catalyzes the condensation of the acetyl group of acetyl coenzyme A (acetyl-CoA) with oxaloacetate to form citrate. This enzyme is highly Re-face stereospecific with respect to the C-2 of oxaloacetate. The protein is Citrate (Re)-synthase of Dehalococcoides mccartyi (strain CBDB1).